We begin with the raw amino-acid sequence, 266 residues long: MASTQCFLHHHALSTPARTSLVRGIVPSLKSNQLLVCRAQNKQSAPQQDNVNSVSVSRRLALTLLIGAAAVGSKVSPADAAYGEAANVFGKPKTDTDFQTYNGDGFKLQIPSKWNPNKEVEYPGQVLRFEDNFDATSNVIVAITPTDKKSITDFGSPEQFLSQVDYLLGRQAYSGKTDSEGGFESDAVAIANVLETSTAEVGGKQYYYLSILTRTADGNEGGKHQLVTATVNDGKLYICKAQAGDKRWFKGAKKFVENTATSFSLA.

A chloroplast-targeting transit peptide spans 1–80 (MASTQCFLHH…VGSKVSPADA (80 aa)).

The protein belongs to the PsbP family.

Its subcellular location is the plastid. It localises to the chloroplast thylakoid membrane. Its function is as follows. May be involved in the regulation of photosystem II. The sequence is that of Oxygen-evolving enhancer protein 2-3, chloroplastic (PSBP3) from Nicotiana tabacum (Common tobacco).